The primary structure comprises 740 residues: Elongation factor 2 (740 aa).

Residues 23–264 form the tr-type G domain; sequence AQIRNAGTLA…MIIEHIPPPN (242 aa). Residues 32 to 39, 98 to 102, and 152 to 155 each bind GTP; these read AHVDHGKT, DTPGH, and NKID. H605 carries the diphthamide modification.

It belongs to the TRAFAC class translation factor GTPase superfamily. Classic translation factor GTPase family. EF-G/EF-2 subfamily.

It localises to the cytoplasm. Functionally, catalyzes the GTP-dependent ribosomal translocation step during translation elongation. During this step, the ribosome changes from the pre-translocational (PRE) to the post-translocational (POST) state as the newly formed A-site-bound peptidyl-tRNA and P-site-bound deacylated tRNA move to the P and E sites, respectively. Catalyzes the coordinated movement of the two tRNA molecules, the mRNA and conformational changes in the ribosome. The sequence is that of Elongation factor 2 from Pyrobaculum aerophilum (strain ATCC 51768 / DSM 7523 / JCM 9630 / CIP 104966 / NBRC 100827 / IM2).